A 205-amino-acid chain; its full sequence is Transcriptional regulator GfcR (205 aa).

This sequence belongs to the purine/pyrimidine phosphoribosyltransferase family. GfcR subfamily.

The protein is Transcriptional regulator GfcR of Methanococcus vannielii (strain ATCC 35089 / DSM 1224 / JCM 13029 / OCM 148 / SB).